A 375-amino-acid polypeptide reads, in one-letter code: Growth/differentiation factor 8 (375 aa).

A signal peptide spans 1 to 23 (MQKLAVYVYIYLFMQILVHPVAL). Positions 24–266 (DGSSQPTENA…VTDTPKRSRR (243 aa)) are excised as a propeptide. Asparagine 71 is a glycosylation site (N-linked (GlcNAc...) asparagine). 4 disulfide bridges follow: cysteine 272–cysteine 282, cysteine 281–cysteine 340, cysteine 309–cysteine 372, and cysteine 313–cysteine 374.

It belongs to the TGF-beta family. Homodimer; disulfide-linked.

It localises to the secreted. Its function is as follows. Acts specifically as a negative regulator of skeletal muscle growth. The polypeptide is Growth/differentiation factor 8 (MSTN) (Meleagris gallopavo (Wild turkey)).